A 437-amino-acid chain; its full sequence is GTPase Der (437 aa).

2 consecutive EngA-type G domains span residues Pro4–Ala167 and Ile175–Arg352. Residues Gly10–Ser17, Asp57–Ile61, Asn119–Asp122, Gly181–Ser188, Asp229–Ile233, and Asn294–Asp297 each bind GTP. The KH-like domain maps to Gln353–Gln437.

It belongs to the TRAFAC class TrmE-Era-EngA-EngB-Septin-like GTPase superfamily. EngA (Der) GTPase family. In terms of assembly, associates with the 50S ribosomal subunit.

In terms of biological role, GTPase that plays an essential role in the late steps of ribosome biogenesis. In Limosilactobacillus reuteri (strain DSM 20016) (Lactobacillus reuteri), this protein is GTPase Der.